A 399-amino-acid polypeptide reads, in one-letter code: Glutathione S-transferase LANCL1 (399 aa).

Ala2 carries the N-acetylalanine modification. Lys142 is modified (N6-acetyllysine). Cys276 lines the Zn(2+) pocket. Residue Lys317 coordinates glutathione. Zn(2+) contacts are provided by Cys322 and His323. 364–367 (RTPD) is a glutathione binding site.

Belongs to the LanC-like protein family. Interacts with the C-terminal of STOM. Interacts with the EPS8 SH3 domain. Interaction with EPS8 is inhibited by glutathione binding. Strongly expressed in the brain, testis and skeletal muscle. Expressed in the neurons of the cerebellum, the germinal cells of the seminiferous tubules in testis, in liver hepoatocytes and in cardiac myocytes.

Its subcellular location is the cytoplasm. The protein localises to the cell membrane. The catalysed reaction is RX + glutathione = an S-substituted glutathione + a halide anion + H(+). It catalyses the reaction 1-chloro-2,4-dinitrobenzene + glutathione = 2,4-dinitrophenyl-S-glutathione + chloride + H(+). Functionally, functions as a glutathione transferase. Catalyzes conjugation of the glutathione (GSH) to artificial substrates 1-chloro-2,4-dinitrobenzene (CDNB) and p-nitrophenyl acetate. Mitigates neuronal oxidative stress during normal postnatal development and in response to oxidative stresses probably through GSH antioxidant defense mechanism. May play a role in EPS8 signaling. Binds glutathione. This chain is Glutathione S-transferase LANCL1, found in Rattus norvegicus (Rat).